Reading from the N-terminus, the 109-residue chain is Probable endoribonuclease MazF5 (109 aa).

It belongs to the PemK/MazF family. Forms a complex with cognate antitoxin MazE5.

Its function is as follows. Toxic component of a type II toxin-antitoxin (TA) system. Upon expression in M.smegmatis inhibits colony formation. Its toxic effect is neutralized by coexpression with cognate antitoxin MazE5. Probably an endoribonuclease. This chain is Probable endoribonuclease MazF5 (mazF5), found in Mycobacterium tuberculosis (strain ATCC 25618 / H37Rv).